We begin with the raw amino-acid sequence, 699 residues long: Macoilin-2 (699 aa).

4 helical membrane passes run 28 to 48 (TFLY…DFVL), 75 to 95 (AFSV…LLFI), 120 to 140 (VCLP…AIRF), and 154 to 174 (FAAH…KSYV). Disordered regions lie at residues 219–289 (AAAA…SILP), 322–411 (LLKD…PNNQ), 432–451 (LQAS…SLGT), and 679–699 (FMDT…PLKK). N-linked (GlcNAc...) asparagine glycosylation is found at asparagine 241, asparagine 267, asparagine 345, and asparagine 365. Basic and acidic residues predominate over residues 257-271 (LEYREKERGKNESKK). Residues 329–346 (SSSSSSTSSNSNKNYKNA) are compositionally biased toward low complexity. The span at 366-382 (GSVPSSSGPSSSASSSS) shows a compositional bias: low complexity. Asparagine 690 carries an N-linked (GlcNAc...) asparagine glycan.

The protein belongs to the macoilin family.

It is found in the nucleus membrane. Its subcellular location is the cell projection. The protein localises to the axon. The protein resides in the rough endoplasmic reticulum membrane. Its function is as follows. May play a role in the regulation of neuronal activity. The sequence is that of Macoilin-2 from Danio rerio (Zebrafish).